The sequence spans 447 residues: Probable glycine dehydrogenase (decarboxylating) subunit 1 (447 aa).

It belongs to the GcvP family. N-terminal subunit subfamily. In terms of assembly, the glycine cleavage system is composed of four proteins: P, T, L and H. In this organism, the P 'protein' is a heterodimer of two subunits.

It carries out the reaction N(6)-[(R)-lipoyl]-L-lysyl-[glycine-cleavage complex H protein] + glycine + H(+) = N(6)-[(R)-S(8)-aminomethyldihydrolipoyl]-L-lysyl-[glycine-cleavage complex H protein] + CO2. The glycine cleavage system catalyzes the degradation of glycine. The P protein binds the alpha-amino group of glycine through its pyridoxal phosphate cofactor; CO(2) is released and the remaining methylamine moiety is then transferred to the lipoamide cofactor of the H protein. The chain is Probable glycine dehydrogenase (decarboxylating) subunit 1 from Sulfolobus acidocaldarius (strain ATCC 33909 / DSM 639 / JCM 8929 / NBRC 15157 / NCIMB 11770).